Reading from the N-terminus, the 870-residue chain is Dynamin-2 (870 aa).

The 267-residue stretch at 28–294 (HLDLPQIAVV…LTNHIRESLP (267 aa)) folds into the Dynamin-type G domain. The interval 38–45 (GGQSAGKS) is G1 motif. Residues Ser-41, Gly-43, Lys-44, Ser-45, Ser-46, Arg-59, and Gly-60 each coordinate GDP. Positions 64-66 (VTR) are G2 motif. Positions 136 to 139 (DLPG) are G3 motif. Positions 205 to 208 (TKLD) are G4 motif. 3 residues coordinate GDP: Lys-206, Asp-208, and Asp-211. Tyr-231 carries the phosphotyrosine modification. The segment at 235-238 (VNRS) is G5 motif. Residues Asn-236, Arg-237, and Gln-239 each coordinate GDP. Residue Lys-299 is modified to N6-acetyllysine. A PH domain is found at 519–625 (LVIRRGWLTI…WKASFLRAGV (107 aa)). The residue at position 597 (Tyr-597) is a Phosphotyrosine. Lys-598 carries the post-translational modification N6-acetyllysine. The GED domain maps to 653–744 (VETIRNLVDS…IIGDISTSTV (92 aa)). Residues 741 to 870 (TSTVSTPVPP…IRPAEPSLLD (130 aa)) form a disordered region. Thr-755 carries the post-translational modification Phosphothreonine. The segment covering 756–767 (WLQNTSSHSPTP) has biased composition (polar residues). Ser-764 carries the phosphoserine; by CDK1 modification. Positions 826-846 (SAPPQIPSRPARIPPGIPPGV) are enriched in pro residues. Positions 847 to 864 (PSRRAPAAPSRPTIIRPA) are enriched in low complexity.

It belongs to the TRAFAC class dynamin-like GTPase superfamily. Dynamin/Fzo/YdjA family. As to quaternary structure, oligomerizes into a helical polymer that self-assembles around the vesicle membrane, when associated to the menbrane through lipid binding. Interacts with SHANK1 and SHANK2. Interacts with SNX9. Interacts (via C-terminal proline-rich domain (PRD)) with SNX18 (via SH3 domain); this interaction regulates ATG9A and ATG16L1 trafficking from recycling endosomes to sites of autophagosome formation. Interacts with SNX33 (via SH3 domain). Interacts with PSTPIP1 (via SH3 domain). Interacts with CTNND2. Interacts (via C-terminal proline-rich domain (PRD)) with BIN1 (via SH3 domain); this interaction allows the recruitment of DNM2 to the membrane tubules and inhibits self-assembly-stimulated GTPase activity on the membrane. Interacts with GABARAP, GABARAPL1 and GABARAPL2. Interacts with MAP1LC3B (the lipidate and non-lipidated LC3 form); this interaction mediates recycling endosome scission leading to autophagosome release. Interacts with ITSN1. Interacts with MYOF. May interact with PIK3C3. May be a component of a complex composed of RAB5A (in GDP-bound form), DYN2 and PIK3C3. Interacts with SDC4; this interaction is markedly enhanced at focal ahesion site upon induction of focal adhesions and stress-fiber formation. Interacts with ACTN1. Interacts with CTTN; this interaction stimulates the intrinsic GTPase activity of DNM2 and stabilizes the association of DNM2 and actin filaments; in addition this interaction is stimulated by ligand binding to the receptor, leading to the recruitment of the DNM2-CTTN complex to the sequestered receptor-ligand complex to its internalization. Interacts with NOSTRIN (via SH3 domain); this interaction allows the recruitment of NOS3 to dynamin-positive structures. Interacts (via C-terminal proline-rich domain (PRD)) with SH3BP4 (via SH3 domain); this interaction controls the GTPase activity and is prevented by EGFR-induced tyrosine phosphorylation of either DNM2 or SH3BP4. Interacts with MYO1E (via SH3 domain). Interacts with TUBG1; this interaction may participate in centrosome cohesion. In terms of processing, phosphorylation at Ser-848 by GSK3-alpha relieves the inhibition of BIN1 and promotes endocytosis. Phosphorylation at Ser-764 by CDK1 is greatly increased upon mitotic entry. It regulates cytokinesis downstream of calcineurin, and does not affect clathrin-mediated endocytosis. Dephosphorylated by calcineurin/PP2 during cytokinesis in a Ca(2+)- and calmodulin-dependent manner. Phosphorylated on tyrosine residues by EGFR. Phosphorylated on tyrosine residues after activation of SRC. As to expression, ubiquitously expressed. Brain expression is restricted to glial cells and fibroblasts. Highest levels in the testis.

It is found in the cytoplasm. It localises to the cytoskeleton. The protein localises to the cytoplasmic vesicle. Its subcellular location is the clathrin-coated vesicle. The protein resides in the cell projection. It is found in the uropodium. It localises to the endosome. The protein localises to the microtubule organizing center. Its subcellular location is the centrosome. The protein resides in the centriole. It is found in the recycling endosome. It localises to the phagocytic cup. The protein localises to the phagosome membrane. Its subcellular location is the podosome. The protein resides in the cell junction. It is found in the postsynaptic density. It localises to the synapse. The protein localises to the synaptosome. Its subcellular location is the midbody. The protein resides in the membrane. It is found in the clathrin-coated pit. It localises to the cell membrane. It carries out the reaction GTP + H2O = GDP + phosphate + H(+). Functionally, catalyzes the hydrolysis of GTP and utilizes this energy to mediate vesicle scission at plasma membrane during endocytosis and filament remodeling at many actin structures during organization of the actin cytoskeleton. Plays an important role in vesicular trafficking processes, namely clathrin-mediated endocytosis (CME), exocytic and clathrin-coated vesicle from the trans-Golgi network, and PDGF stimulated macropinocytosis. During vesicular trafficking process, associates to the membrane, through lipid binding, and self-assembles into ring-like structure through oligomerization to form a helical polymer around the vesicle membrane and leading to vesicle scission. Plays a role in organization of the actin cytoskeleton by mediating arrangement of stress fibers and actin bundles in podocytes. During organization of the actin cytoskeleton, self-assembles into ring-like structure that directly bundles actin filaments to form typical membrane tubules decorated with dynamin spiral polymers. Self-assembly increases GTPase activity and the GTP hydrolysis causes the rapid depolymerization of dynamin spiral polymers, and results in dispersion of actin bundles. Remodels, through its interaction with CTTN, bundled actin filaments in a GTPase-dependent manner and plays a role in orchestrating the global actomyosin cytoskeleton. The interaction with CTTN stabilizes the interaction of DNM2 and actin filaments and stimulates the intrinsic GTPase activity that results in actin filament-barbed ends and increases the sensitivity of filaments in bundles to the actin depolymerizing factor, CFL1. Plays a role in the autophagy process, by participating in the formation of ATG9A vesicles destined for the autophagosomes through its interaction with SNX18, by mediating recycling endosome scission leading to autophagosome release through MAP1LC3B interaction and by regulating maturation of apoptotic cell corpse-containing phagosomes by recruiting PIK3C3 to the phagosome membrane. Also plays a role in cytokinesis. May participate in centrosome cohesion through its interaction with TUBG1. Plays a role in the regulation of neuron morphology, axon growth and formation of neuronal growth cones. Involved in membrane tubulation. The sequence is that of Dynamin-2 from Rattus norvegicus (Rat).